The chain runs to 325 residues: Glycine--tRNA ligase alpha subunit (325 aa).

It belongs to the class-II aminoacyl-tRNA synthetase family. As to quaternary structure, tetramer of two alpha and two beta subunits.

The protein localises to the cytoplasm. It carries out the reaction tRNA(Gly) + glycine + ATP = glycyl-tRNA(Gly) + AMP + diphosphate. The chain is Glycine--tRNA ligase alpha subunit from Ralstonia nicotianae (strain ATCC BAA-1114 / GMI1000) (Ralstonia solanacearum).